The primary structure comprises 78 residues: Protein SlyX homolog (78 aa).

This sequence belongs to the SlyX family.

This Xylella fastidiosa (strain M23) protein is Protein SlyX homolog.